We begin with the raw amino-acid sequence, 341 residues long: MNLKVLKVIDGETVFPPPIWMMRQAGRYLPEYRETRKKAGSFLDLCYSPDLAVEVTLQPIRRFGFDAAILFSDILVVPHALGRDLRFEEGKGPLMTPIDADEIFWLETEGVAKRLEPVYETVRLVREQLPDETTLLGFCGAPWTVATYMIAGHGTPDQAPARLFAYRFPEAFEKLLNDLADVSAEYLIEQLGAGADAVQIFDSWSGVLDEDCFERFCIRPVARIVQKVRAVYPQARIIGFPKGAGMLYAGYREKTGVDMLGLDWSVPLSFAALLQEEGAVQGNLDPLRVVAGGNALDEGVDAILERMGQGPLVFNLGHGITPQAPIENVQRMIDRVRGGKS.

Substrate contacts are provided by residues 23-27 (RQAGR), F42, D73, Y148, S203, and H318.

The protein belongs to the uroporphyrinogen decarboxylase family. Homodimer.

The protein localises to the cytoplasm. The catalysed reaction is uroporphyrinogen III + 4 H(+) = coproporphyrinogen III + 4 CO2. It functions in the pathway porphyrin-containing compound metabolism; protoporphyrin-IX biosynthesis; coproporphyrinogen-III from 5-aminolevulinate: step 4/4. Catalyzes the decarboxylation of four acetate groups of uroporphyrinogen-III to yield coproporphyrinogen-III. In Brucella melitensis biotype 1 (strain ATCC 23456 / CCUG 17765 / NCTC 10094 / 16M), this protein is Uroporphyrinogen decarboxylase.